Reading from the N-terminus, the 227-residue chain is Cytidylate kinase (227 aa).

12-20 is an ATP binding site; it reads GPSGAGKGT.

Belongs to the cytidylate kinase family. Type 1 subfamily.

The protein resides in the cytoplasm. It catalyses the reaction CMP + ATP = CDP + ADP. The catalysed reaction is dCMP + ATP = dCDP + ADP. The polypeptide is Cytidylate kinase (Sodalis glossinidius (strain morsitans)).